The primary structure comprises 269 residues: Formamidopyrimidine-DNA glycosylase (269 aa).

Pro2 serves as the catalytic Schiff-base intermediate with DNA. The active-site Proton donor is the Glu3. Lys57 (proton donor; for beta-elimination activity) is an active-site residue. Residues His90, Arg109, and Arg150 each contribute to the DNA site. An FPG-type zinc finger spans residues 235 to 269 (QVYGKAGEQCPNCAELIQELKIGQRNTFYCSSCQV). The active-site Proton donor; for delta-elimination activity is the Arg259.

It belongs to the FPG family. As to quaternary structure, monomer. Zn(2+) is required as a cofactor.

The enzyme catalyses Hydrolysis of DNA containing ring-opened 7-methylguanine residues, releasing 2,6-diamino-4-hydroxy-5-(N-methyl)formamidopyrimidine.. It catalyses the reaction 2'-deoxyribonucleotide-(2'-deoxyribose 5'-phosphate)-2'-deoxyribonucleotide-DNA = a 3'-end 2'-deoxyribonucleotide-(2,3-dehydro-2,3-deoxyribose 5'-phosphate)-DNA + a 5'-end 5'-phospho-2'-deoxyribonucleoside-DNA + H(+). Its function is as follows. Involved in base excision repair of DNA damaged by oxidation or by mutagenic agents. Acts as a DNA glycosylase that recognizes and removes damaged bases. Has a preference for oxidized purines, such as 7,8-dihydro-8-oxoguanine (8-oxoG). Has AP (apurinic/apyrimidinic) lyase activity and introduces nicks in the DNA strand. Cleaves the DNA backbone by beta-delta elimination to generate a single-strand break at the site of the removed base with both 3'- and 5'-phosphates. In Vibrio atlanticus (strain LGP32) (Vibrio splendidus (strain Mel32)), this protein is Formamidopyrimidine-DNA glycosylase.